A 398-amino-acid chain; its full sequence is Spermatogenesis associated 6-like protein (398 aa).

The disordered stretch occupies residues 170–215 (KLNGPANNRKKKPKEKNSDQLSKGTPFWGPSPQRLHLHRPTQRNPG). A phosphoserine mark is found at Ser-269 and Ser-272.

This sequence belongs to the SPATA6 family.

This Rattus norvegicus (Rat) protein is Spermatogenesis associated 6-like protein (Spata6l).